Consider the following 172-residue polypeptide: Ribosome maturation factor RimM (172 aa).

Residues 100 to 172 (PGEYYRVDLV…RIVVDWDPGF (73 aa)) enclose the PRC barrel domain.

Belongs to the RimM family. In terms of assembly, binds ribosomal protein uS19.

The protein localises to the cytoplasm. Functionally, an accessory protein needed during the final step in the assembly of 30S ribosomal subunit, possibly for assembly of the head region. Essential for efficient processing of 16S rRNA. May be needed both before and after RbfA during the maturation of 16S rRNA. It has affinity for free ribosomal 30S subunits but not for 70S ribosomes. In Methylococcus capsulatus (strain ATCC 33009 / NCIMB 11132 / Bath), this protein is Ribosome maturation factor RimM.